The primary structure comprises 113 residues: Protein suex-1 (113 aa).

The N-terminal stretch at M1 to A22 is a signal peptide.

The chain is Protein suex-1 from Caenorhabditis elegans.